The following is a 408-amino-acid chain: Imidazolonepropionase (408 aa).

The Fe(3+) site is built by histidine 73 and histidine 75. Positions 73 and 75 each coordinate Zn(2+). Arginine 82, tyrosine 145, and histidine 178 together coordinate 4-imidazolone-5-propanoate. Tyrosine 145 provides a ligand contact to N-formimidoyl-L-glutamate. Histidine 243 serves as a coordination point for Fe(3+). Zn(2+) is bound at residue histidine 243. Glutamine 246 contributes to the 4-imidazolone-5-propanoate binding site. Position 318 (aspartate 318) interacts with Fe(3+). Residue aspartate 318 participates in Zn(2+) binding. N-formimidoyl-L-glutamate contacts are provided by asparagine 320 and glycine 322. Serine 323 contributes to the 4-imidazolone-5-propanoate binding site.

Belongs to the metallo-dependent hydrolases superfamily. HutI family. Zn(2+) is required as a cofactor. Fe(3+) serves as cofactor.

The protein localises to the cytoplasm. The catalysed reaction is 4-imidazolone-5-propanoate + H2O = N-formimidoyl-L-glutamate. The protein operates within amino-acid degradation; L-histidine degradation into L-glutamate; N-formimidoyl-L-glutamate from L-histidine: step 3/3. In terms of biological role, catalyzes the hydrolytic cleavage of the carbon-nitrogen bond in imidazolone-5-propanoate to yield N-formimidoyl-L-glutamate. It is the third step in the universal histidine degradation pathway. In Shewanella baltica (strain OS155 / ATCC BAA-1091), this protein is Imidazolonepropionase.